A 398-amino-acid polypeptide reads, in one-letter code: Probable pectate lyase P56 (398 aa).

Positions 1-27 (MEYSYRTKINVLFIVLILFVFAALGTA) are cleaved as a signal peptide. The N-linked (GlcNAc...) asparagine glycan is linked to N135. Residues D192, D217, and D221 each coordinate Ca(2+). Residue N228 is glycosylated (N-linked (GlcNAc...) asparagine). R273 is an active-site residue.

Belongs to the polysaccharide lyase 1 family. Ca(2+) is required as a cofactor. In terms of tissue distribution, expressed in anthers and pollen.

The enzyme catalyses Eliminative cleavage of (1-&gt;4)-alpha-D-galacturonan to give oligosaccharides with 4-deoxy-alpha-D-galact-4-enuronosyl groups at their non-reducing ends.. It functions in the pathway glycan metabolism; pectin degradation; 2-dehydro-3-deoxy-D-gluconate from pectin: step 2/5. Its function is as follows. Might be needed during pollen development and tube growth. The protein is Probable pectate lyase P56 (LAT56) of Solanum lycopersicum (Tomato).